We begin with the raw amino-acid sequence, 79 residues long: Protein OPG081 (79 aa).

Residues 1-8 (MVDAITVL) are Intravirion-facing. A helical transmembrane segment spans residues 9-29 (TAIGITVLMLLMVISGAAMIV). The Virion surface segment spans residues 30–47 (KELNPNDIFTMQSLKFNR). The helical transmembrane segment at 48–68 (AVTIFKYIGLFIYIPGTIILY) threads the bilayer. Topologically, residues 69–79 (ATYVKSLLMKS) are intravirion.

Belongs to the orthopoxvirus OPG081 family.

Its subcellular location is the virion membrane. Envelope protein. In Vaccinia virus (strain Copenhagen) (VACV), this protein is Protein OPG081 (OPG081).